A 453-amino-acid chain; its full sequence is Septin-10 (453 aa).

Residues 18 to 43 form a disordered region; it reads KTAHTSSQVSDHEQKQKDSPRSLTMS. The segment covering 27–37 has biased composition (basic and acidic residues); sequence SDHEQKQKDSP. In terms of domain architecture, Septin-type G spans 62-328; that stretch reads QGFCFNILCV…ELYRRRKLEE (267 aa). The segment at 72–79 is G1 motif; that stretch reads GETGIGKS. GTP-binding positions include 72 to 79, Gly-127, 208 to 216, Gly-262, and Arg-277; these read GETGIGKS and KADAISKTE. A G3 motif region spans residues 124–127; sequence NTVG. The tract at residues 207-210 is G4 motif; that stretch reads AKAD. The disordered stretch occupies residues 433 to 453; that stretch reads TFMTPGSNLRKDKDRKNSNFM. Residues 441 to 453 are compositionally biased toward basic and acidic residues; it reads LRKDKDRKNSNFM.

The protein belongs to the TRAFAC class TrmE-Era-EngA-EngB-Septin-like GTPase superfamily. Septin GTPase family. In terms of assembly, septins polymerize into heterooligomeric protein complexes that form filaments, and can associate with cellular membranes, actin filaments and microtubules. GTPase activity is required for filament formation. Interacts with ADGB. Proteolytically cleaved in vitro in a calmodulin-dependent manner.

It localises to the cytoplasm. The protein resides in the cytoskeleton. The protein localises to the cell projection. It is found in the cilium. Its subcellular location is the flagellum. In terms of biological role, filament-forming cytoskeletal GTPase. May play a role in cytokinesis (Potential). This chain is Septin-10, found in Bos taurus (Bovine).